We begin with the raw amino-acid sequence, 1030 residues long: Teashirt homolog 2 (1030 aa).

Residues 1 to 120 (MPRRKQQAPK…THPKLPSEPH (120 aa)) are disordered. Residues 11 to 42 (RAAGYAQEEVLKEEEEIKEEEEEEEDSGSVAQ) adopt a coiled-coil conformation. Positions 21 to 37 (LKEEEEIKEEEEEEEDS) are enriched in acidic residues. Composition is skewed to polar residues over residues 39–49 (SVAQHQSSNDT) and 66–95 (SCQN…QVSD). A compositionally biased stretch (basic and acidic residues) spans 103-120 (DVSDKKANTHPKLPSEPH). A Glycyl lysine isopeptide (Lys-Gly) (interchain with G-Cter in SUMO2) cross-link involves residue K189. 2 C2H2-type zinc fingers span residues 216-240 (FRCR…ETGH) and 276-300 (LKCM…KTKH). Residues 240–266 (HYQDDNRKKDKLRPTSYSKPRKRAFQD) are disordered. Glycyl lysine isopeptide (Lys-Gly) (interchain with G-Cter in SUMO2) cross-links involve residues K307 and K316. A disordered region spans residues 328 to 348 (VNRPCSPDSTTGSLADSFSSQ). Polar residues predominate over residues 334-348 (PDSTTGSLADSFSSQ). Residues 381–405 (LKCMECGSSHDTLQQLTTHMMVTGH) form a C2H2-type 3; atypical zinc finger. K418 participates in a covalent cross-link: Glycyl lysine isopeptide (Lys-Gly) (interchain with G-Cter in SUMO2). Residues 432 to 459 (SLSETPNSESLAPKPSSNSPSECTASTT) show a composition bias toward polar residues. Positions 432–488 (SLSETPNSESLAPKPSSNSPSECTASTTELKKESKKEKGEGIEDEQGVKSEDYEDSL) are disordered. Residues 460-482 (ELKKESKKEKGEGIEDEQGVKSE) show a composition bias toward basic and acidic residues. Residues K462, K480, K497, and K601 each participate in a glycyl lysine isopeptide (Lys-Gly) (interchain with G-Cter in SUMO2) cross-link. Basic and acidic residues-rich tracts occupy residues 608–623 (DEVV…HEEA) and 633–664 (SFSK…KPEP). 3 disordered regions span residues 608–687 (DEVV…LPSI), 703–726 (KATE…VFHK), and 759–784 (QPID…SPPQ). K652 is covalently cross-linked (Glycyl lysine isopeptide (Lys-Gly) (interchain with G-Cter in SUMO2)). Over residues 710–722 (SPSCSSPNSSTSP) the composition is skewed to low complexity. The segment covering 773–783 (SSQAQSCTSPP) has biased composition (polar residues). Residues K796 and K816 each participate in a glycyl lysine isopeptide (Lys-Gly) (interchain with G-Cter in SUMO2) cross-link. Residues 837–907 (RKGRQSNWNP…NVKYQLRKTG (71 aa)) constitute a DNA-binding region (homeobox). A C2H2-type 4 zinc finger spans residues 922 to 944 (FYCSDCASQFRTPSTYISHLESH). A Glycyl lysine isopeptide (Lys-Gly) (interchain with G-Cter in SUMO2) cross-link involves residue K962. Disordered stretches follow at residues 965–987 (QEIS…EDTD) and 1009–1030 (LSKT…VDEE). The span at 968–977 (SRVSSAQRSP) shows a compositional bias: polar residues. Residue S976 is modified to Phosphoserine. The C2H2-type 5 zinc-finger motif lies at 990 to 1013 (FKCKLCRRTFVSKHAVKLHLSKTH).

It belongs to the teashirt C2H2-type zinc-finger protein family. Interacts (via homeobox domain) with APBB1 (via PID domain 1). Post-translationally, sumoylated.

The protein resides in the nucleus. In terms of biological role, probable transcriptional regulator involved in developmental processes. May act as a transcriptional repressor (Potential). The protein is Teashirt homolog 2 (Tshz2) of Mus musculus (Mouse).